Consider the following 266-residue polypeptide: Type III pantothenate kinase (266 aa).

6–13 is an ATP binding site; that stretch reads DIGNSRIK. Substrate is bound by residues Y94 and 101–104; that span reads GIDR. Residue D103 is the Proton acceptor of the active site. D128 serves as a coordination point for K(+). Residue T131 coordinates ATP. T183 provides a ligand contact to substrate.

Belongs to the type III pantothenate kinase family. As to quaternary structure, homodimer. NH4(+) is required as a cofactor. Requires K(+) as cofactor.

The protein localises to the cytoplasm. The catalysed reaction is (R)-pantothenate + ATP = (R)-4'-phosphopantothenate + ADP + H(+). Its pathway is cofactor biosynthesis; coenzyme A biosynthesis; CoA from (R)-pantothenate: step 1/5. In terms of biological role, catalyzes the phosphorylation of pantothenate (Pan), the first step in CoA biosynthesis. This chain is Type III pantothenate kinase, found in Nitrosococcus oceani (strain ATCC 19707 / BCRC 17464 / JCM 30415 / NCIMB 11848 / C-107).